Consider the following 139-residue polypeptide: Hydrogenase maturation factor HypA (139 aa).

H2 contributes to the Ni(2+) binding site. Zn(2+) contacts are provided by C73, C76, C110, and C113.

This sequence belongs to the HypA/HybF family.

Functionally, involved in the maturation of [NiFe] hydrogenases. Required for nickel insertion into the metal center of the hydrogenase. This chain is Hydrogenase maturation factor HypA, found in Thermococcus onnurineus (strain NA1).